Reading from the N-terminus, the 158-residue chain is Large ribosomal subunit protein uL11 (158 aa).

This sequence belongs to the universal ribosomal protein uL11 family. In terms of assembly, part of the ribosomal stalk of the 50S ribosomal subunit. Interacts with L10 and the large rRNA to form the base of the stalk. L10 forms an elongated spine to which L12 dimers bind in a sequential fashion forming a multimeric L10(L12)X complex.

In terms of biological role, forms part of the ribosomal stalk which helps the ribosome interact with GTP-bound translation factors. The polypeptide is Large ribosomal subunit protein uL11 (Methanospirillum hungatei JF-1 (strain ATCC 27890 / DSM 864 / NBRC 100397 / JF-1)).